The primary structure comprises 580 residues: Probable inositol transporter 2 (580 aa).

12 helical membrane-spanning segments follow: residues 36–56, 71–91, 106–126, 129–149, 156–176, 189–209, 275–295, 315–335, 343–363, 452–472, 490–510, and 521–541; these read GIGG…LLYI, EMIV…GGWA, FLFL…LLVV, VFVG…ISEA, GALV…SYLI, WMLG…FTLP, GLIA…NTVM, LLSL…IYFI, LLII…GVFY, FGWF…PGMG, ICGG…AQSF, and WTFL…MVCV.

It belongs to the major facilitator superfamily. Sugar transporter (TC 2.A.1.1) family. As to expression, expressed in the tapetum, but not in pollen grains. Detected in leaf vascular tissue and in roots.

The protein resides in the cell membrane. Its activity is regulated as follows. Inhibited by nickel and to a lesser extent by cobalt. Its function is as follows. Plasma membrane inositol-proton symporter. Specific for several inositol epimers, such as myoinositol and scylloinositol. D-chiroinositol, mucoinositol, alloinositol and pinitol are also transported with a lower activity. Not active with galactinol and phytate. The chain is Probable inositol transporter 2 (INT2) from Arabidopsis thaliana (Mouse-ear cress).